The sequence spans 828 residues: Periplasmic nitrate reductase (828 aa).

The tat-type signal signal peptide spans 1–31 (MKLSRRSFMKANAVAAAAAAAGLSVPGVARA). One can recognise a 4Fe-4S Mo/W bis-MGD-type domain in the interval 39–95 (IKWDKAPCRFCGTGCGVLVGTQQGRVVACQGDPDAPVNRGLNCIKGYFLPKIMYGKD). The [4Fe-4S] cluster site is built by cysteine 46, cysteine 49, cysteine 53, and cysteine 81. Mo-bis(molybdopterin guanine dinucleotide)-binding positions include lysine 83, glutamine 150, asparagine 175, cysteine 179, 212-219 (WGSNMAEM), 243-247 (STFQH), 262-264 (QSD), methionine 372, glutamine 376, asparagine 482, 508-509 (SD), lysine 531, aspartate 558, and 718-727 (TGRVLEHWHT). Phenylalanine 794 provides a ligand contact to substrate. Residues asparagine 802 and lysine 819 each contribute to the Mo-bis(molybdopterin guanine dinucleotide) site.

The protein belongs to the prokaryotic molybdopterin-containing oxidoreductase family. NasA/NapA/NarB subfamily. As to quaternary structure, component of the periplasmic nitrate reductase NapAB complex composed of NapA and NapB. [4Fe-4S] cluster is required as a cofactor. Mo-bis(molybdopterin guanine dinucleotide) serves as cofactor. Post-translationally, predicted to be exported by the Tat system. The position of the signal peptide cleavage has not been experimentally proven.

It is found in the periplasm. The enzyme catalyses 2 Fe(II)-[cytochrome] + nitrate + 2 H(+) = 2 Fe(III)-[cytochrome] + nitrite + H2O. Its function is as follows. Catalytic subunit of the periplasmic nitrate reductase complex NapAB. Receives electrons from NapB and catalyzes the reduction of nitrate to nitrite. The polypeptide is Periplasmic nitrate reductase (Salmonella arizonae (strain ATCC BAA-731 / CDC346-86 / RSK2980)).